A 1111-amino-acid chain; its full sequence is Nuclear migration and anchoring protein unc-84 (1111 aa).

At 1-509 the chain is on the nuclear side; the sequence is MAPATEADNN…LTDKKSSKFS (509 aa). 2 required for nuclear envelope localization regions span residues 118-244 and 503-507; these read YILR…SQTL and KKSSK. Residues 232-253 form a disordered region; that stretch reads ERASRMTTRSQTLERSRKFDGL. Residues 243–252 show a composition bias toward basic and acidic residues; it reads TLERSRKFDG. A helical membrane pass occupies residues 510–530; that stretch reads WCQILGLLLALLFAIFLLGFL. Over 531 to 1111 the chain is Perinuclear space; that stretch reads TSDNTAIRVK…LRVHGKVVQV (581 aa). Residues 912–1111 form an interaction with zyg-12 region; it reads QYDKNHLEAI…LRVHGKVVQV (200 aa). Positions 945–1109 constitute an SUN domain; that stretch reads GGAVVSTRCS…YRLRVHGKVV (165 aa).

In terms of assembly, component of the unc-83-unc-84 LINC complex which contains at least unc-83 and unc-84. Within the unc-83-unc-84 LINC complex interacts (via C-terminus) with unc-83; the interaction is probably required to recruit unc-83 to the nuclear membrane. Most likely interacts with anc-1; the interaction is probably required to recruit anc-1 to the nuclear envelope. Interacts (via C-terminus) with zyg-12 (via C-terminus); the interaction is direct. May interact with lmn-1; this interaction may be required to complete the connection between the nuclear lamina and the cytoskeleton. Expressed in all somatic cells. Not expressed in germ cells in the mitotic and transition zones of the gonad. One study shows expression at the beginning of the late pachytene stage in the proximal gonad, but there is no expression in the male germline, suggesting expression is specific to oogenesis in hermaphrodites.

Its subcellular location is the nucleus inner membrane. It is found in the cytoplasm. The protein resides in the cytoskeleton. Its function is as follows. Involved in nuclear migration and anchoring in hypodermal precursor cells. Most likely recruits anc-1 to the nuclear envelope where anc-1 functions to tether the nucleus to the actin cytoskeleton. Component of the unc-83-unc-84 LINC (LInker of Nucleoskeleton and Cytoskeleton) complex where it recruits and interacts with unc-83 to form a bridge connecting the nuclear envelope to the cytoskeleton which allows for nuclear transport along microtubules. Its role in nuclear migration may be in association with lamin, lmn-1. Regulates nuclear migrations in one-cell embryos, controlling the posterior migration of the male pronucleus following fertilization. Not required for centrosome attachment to the nucleus. Plays a role in the maintenance of the nuclear envelope architecture in body wall muscle cells. May be involved in DNA damage repair through an association with zyg-12. Potentially has roles in homologous recombination, double strand break repair and meiotic recombination. Specifically, may in part inhibit non-homologous end joining repair, most likely through recruiting fan-1 to the nucleoplasm, to facilitate the repair of DNA cross-links. The sequence is that of Nuclear migration and anchoring protein unc-84 from Caenorhabditis elegans.